A 447-amino-acid polypeptide reads, in one-letter code: Methylenetetrahydrofolate--tRNA-(uracil-5-)-methyltransferase TrmFO (447 aa).

FAD is bound at residue G13–G18.

This sequence belongs to the MnmG family. TrmFO subfamily. FAD is required as a cofactor.

The protein localises to the cytoplasm. The enzyme catalyses uridine(54) in tRNA + (6R)-5,10-methylene-5,6,7,8-tetrahydrofolate + NADH + H(+) = 5-methyluridine(54) in tRNA + (6S)-5,6,7,8-tetrahydrofolate + NAD(+). It catalyses the reaction uridine(54) in tRNA + (6R)-5,10-methylene-5,6,7,8-tetrahydrofolate + NADPH + H(+) = 5-methyluridine(54) in tRNA + (6S)-5,6,7,8-tetrahydrofolate + NADP(+). Catalyzes the folate-dependent formation of 5-methyl-uridine at position 54 (M-5-U54) in all tRNAs. This is Methylenetetrahydrofolate--tRNA-(uracil-5-)-methyltransferase TrmFO from Streptococcus thermophilus (strain ATCC BAA-491 / LMD-9).